Consider the following 331-residue polypeptide: Transmembrane protein 59-like (331 aa).

Residues 1–21 (MAAVALPLLLLLASPATPTPA) form the signal peptide. The disordered stretch occupies residues 15-62 (PATPTPARDPFSPQLGDTQRCQQRCRQRHPGLPPAQPEPEGPSESPNN). Pro residues predominate over residues 45 to 54 (GLPPAQPEPE). Asn-90 carries an N-linked (GlcNAc...) asparagine glycan. The helical transmembrane segment at 258–278 (VLFCCLFLSVLIILWLSCCTL) threads the bilayer. The Microbody targeting signal motif lies at 329–331 (TTL).

Belongs to the TMEM59 family.

The protein localises to the golgi apparatus membrane. Its function is as follows. Modulates the O-glycosylation and complex N-glycosylation steps occurring during the Golgi maturation of APP. Inhibits APP transport to the cell surface and further shedding. This Rattus norvegicus (Rat) protein is Transmembrane protein 59-like (Tmem59l).